Reading from the N-terminus, the 171-residue chain is 3-hydroxydecanoyl-[acyl-carrier-protein] dehydratase (171 aa).

His-70 is a catalytic residue.

Belongs to the thioester dehydratase family. FabA subfamily. As to quaternary structure, homodimer.

It localises to the cytoplasm. It carries out the reaction a (3R)-hydroxyacyl-[ACP] = a (2E)-enoyl-[ACP] + H2O. The enzyme catalyses (3R)-hydroxydecanoyl-[ACP] = (2E)-decenoyl-[ACP] + H2O. It catalyses the reaction (2E)-decenoyl-[ACP] = (3Z)-decenoyl-[ACP]. The protein operates within lipid metabolism; fatty acid biosynthesis. Necessary for the introduction of cis unsaturation into fatty acids. Catalyzes the dehydration of (3R)-3-hydroxydecanoyl-ACP to E-(2)-decenoyl-ACP and then its isomerization to Z-(3)-decenoyl-ACP. Can catalyze the dehydratase reaction for beta-hydroxyacyl-ACPs with saturated chain lengths up to 16:0, being most active on intermediate chain length. The sequence is that of 3-hydroxydecanoyl-[acyl-carrier-protein] dehydratase from Pseudomonas putida (strain W619).